Reading from the N-terminus, the 306-residue chain is MNMSNMAIDLVGVRKSFGDKVIVNDLSFSVARGECFGLLGPNGAGKSTIARMLLGMISPDRGKITVLDEPVPSRARAARVRVGVVPQFDNLEPEFTVRENLLVFGRYFGMSARTIEAVVPSLLEFARLESKADVRVSLLSGGMKRRLTLARALINDPHLLVMDEPTTGLDPHARHLIWERLRALLARGKTILLTTHFMEEAERLCDRLCVLESGCKIAEGKPDALIDEHIGCNVIEIYGGDLDQLRELIRPYARHIEVSGETLFCYARCPDEISVHLRGRTDLRVLQRPPNLEDVFLRLTGREMEK.

One can recognise an ABC transporter domain in the interval 8–238 (IDLVGVRKSF…HIGCNVIEIY (231 aa)). 40–47 (GPNGAGKS) contacts ATP.

This sequence belongs to the ABC transporter superfamily. Lipooligosaccharide exporter (TC 3.A.1.102) family. As to quaternary structure, the complex is composed of two ATP-binding proteins (NodI) and two transmembrane proteins (NodJ).

The protein localises to the cell inner membrane. Functionally, part of the ABC transporter complex NodIJ involved in the export of the nodulation factors (Nod factors), the bacterial signal molecules that induce symbiosis and subsequent nodulation induction. Nod factors are LCO (lipo-chitin oligosaccharide), a modified beta-1,4-linked N-acetylglucosamine oligosaccharide. This subunit is responsible for energy coupling to the transport system. The chain is Nod factor export ATP-binding protein I from Bradyrhizobium diazoefficiens (strain JCM 10833 / BCRC 13528 / IAM 13628 / NBRC 14792 / USDA 110).